The chain runs to 201 residues: Large ribosomal subunit protein uL4 (201 aa).

Positions 46–71 are disordered; the sequence is QKTRAEVVGSGKKPWRQKGTGRARAG.

The protein belongs to the universal ribosomal protein uL4 family. In terms of assembly, part of the 50S ribosomal subunit.

Functionally, one of the primary rRNA binding proteins, this protein initially binds near the 5'-end of the 23S rRNA. It is important during the early stages of 50S assembly. It makes multiple contacts with different domains of the 23S rRNA in the assembled 50S subunit and ribosome. Its function is as follows. Forms part of the polypeptide exit tunnel. This Shewanella woodyi (strain ATCC 51908 / MS32) protein is Large ribosomal subunit protein uL4.